A 71-amino-acid polypeptide reads, in one-letter code: Small integral membrane protein 31 (71 aa).

A helical transmembrane segment spans residues 8 to 28 (LEMAFILLAFVIFSLFTLASI). The disordered stretch occupies residues 31 to 71 (TPDDSNEEEEHEKKGREKKRKKSEKKKNCSEEEHRIEAVEL). Over residues 46–55 (REKKRKKSEK) the composition is skewed to basic residues. The segment covering 56–71 (KKNCSEEEHRIEAVEL) has biased composition (basic and acidic residues). N-linked (GlcNAc...) asparagine glycosylation occurs at N58.

It localises to the membrane. The polypeptide is Small integral membrane protein 31 (Homo sapiens (Human)).